We begin with the raw amino-acid sequence, 199 residues long: N-(5'-phosphoribosyl)anthranilate isomerase (199 aa).

Belongs to the TrpF family.

It carries out the reaction N-(5-phospho-beta-D-ribosyl)anthranilate = 1-(2-carboxyphenylamino)-1-deoxy-D-ribulose 5-phosphate. It functions in the pathway amino-acid biosynthesis; L-tryptophan biosynthesis; L-tryptophan from chorismate: step 3/5. This is N-(5'-phosphoribosyl)anthranilate isomerase from Sulfolobus acidocaldarius (strain ATCC 33909 / DSM 639 / JCM 8929 / NBRC 15157 / NCIMB 11770).